A 175-amino-acid polypeptide reads, in one-letter code: MQAASLAFHPPALRTSPSYLSSKLPHHLNYSLFKHAPSTSTLSLTQVLSRNTICKPPAVGKYVREDYLVKKLSAKEIQELIKGERNVPLIIDFYATWCGPCILMAQELEMLAVEYENNALIVKVDTDDEYEFARDMQVRGLPTLYFISPDSSKDAIRTEGLIPIQMMRDIIDNDL.

A chloroplast-targeting transit peptide spans 1-64; the sequence is MQAASLAFHP…KPPAVGKYVR (64 aa). Residues 74–175 enclose the Thioredoxin domain; sequence AKEIQELIKG…MMRDIIDNDL (102 aa). Catalysis depends on nucleophile residues Cys98 and Cys101. Residues Cys98 and Cys101 are joined by a disulfide bond.

It belongs to the thioredoxin family. Plant CITRX-type subfamily. As to quaternary structure, interacts with Cf-9 resistance protein.

Its subcellular location is the plastid. It localises to the chloroplast. Its function is as follows. Probable thiol-disulfide oxidoreductase that may play a role in proper chloroplast development. This Solanum lycopersicum (Tomato) protein is Thioredoxin-like protein CITRX, chloroplastic.